The chain runs to 290 residues: Small ribosomal subunit biogenesis GTPase RsgA (290 aa).

A CP-type G domain is found at 63-220 (KNELIRPPIA…IADTPGFSNL (158 aa)). GTP is bound by residues 112 to 115 (NKFD) and 162 to 170 (GPSGVGKST). Residues C244, C249, H251, and C257 each coordinate Zn(2+).

The protein belongs to the TRAFAC class YlqF/YawG GTPase family. RsgA subfamily. Monomer. Associates with 30S ribosomal subunit, binds 16S rRNA. It depends on Zn(2+) as a cofactor.

It localises to the cytoplasm. Functionally, one of several proteins that assist in the late maturation steps of the functional core of the 30S ribosomal subunit. Helps release RbfA from mature subunits. May play a role in the assembly of ribosomal proteins into the subunit. Circularly permuted GTPase that catalyzes slow GTP hydrolysis, GTPase activity is stimulated by the 30S ribosomal subunit. The chain is Small ribosomal subunit biogenesis GTPase RsgA from Carboxydothermus hydrogenoformans (strain ATCC BAA-161 / DSM 6008 / Z-2901).